A 377-amino-acid polypeptide reads, in one-letter code: Guanine nucleotide-binding protein subunit beta-1 (377 aa).

WD repeat units follow at residues 63-93 (GHTG…IVWN), 105-135 (LPCA…SIFN), 154-185 (GHKG…VLWD), 202-233 (GHTA…RLWD), 246-276 (GHEG…RLFD), 293-323 (GDIP…YVWD), and 339-369 (SHEG…KIWA).

This sequence belongs to the WD repeat G protein beta family. G proteins are composed of 3 units, alpha, beta and gamma.

Functionally, guanine nucleotide-binding proteins (G proteins) are involved as a modulator or transducer in various transmembrane signaling systems. The beta and gamma chains are required for the GTPase activity, for replacement of GDP by GTP, and for G protein-effector interaction. This is Guanine nucleotide-binding protein subunit beta-1 from Nicotiana tabacum (Common tobacco).